The sequence spans 169 residues: uncharacterized protein (169 aa).

Residues 28–157 (ELHLVIHVCI…EFIPYFFLNQ (130 aa)) form the Nudix hydrolase domain. The short motif at 65 to 87 (AGSALKGETSQQAAEREVQEELG) is the Nudix box element. Positions 81 and 85 each coordinate Mg(2+).

The protein belongs to the Nudix hydrolase family. Mg(2+) serves as cofactor.

This is an uncharacterized protein from Listeria monocytogenes serovar 1/2a (strain ATCC BAA-679 / EGD-e).